Consider the following 321-residue polypeptide: Hydropyrene synthase (321 aa).

Residues aspartate 82, asparagine 225, serine 229, and glutamate 233 each coordinate Mg(2+). A DDxx(x)D/E motif motif is present at residues 82-87; that stretch reads DDRAID. The short motif at 225 to 233 is the NDxxSxxxD/E motif element; that stretch reads NDLHSFARE.

The protein belongs to the terpene synthase family. The cofactor is Mg(2+).

It carries out the reaction (2E,6E,10E)-geranylgeranyl diphosphate = hydropyrene + diphosphate. The enzyme catalyses (2E,6E,10E)-geranylgeranyl diphosphate + H2O = hydropyrenol + diphosphate. The catalysed reaction is (2E,6E,10E)-geranylgeranyl diphosphate = isoelisabethatriene + diphosphate. It functions in the pathway secondary metabolite biosynthesis; terpenoid biosynthesis. Its function is as follows. Terpene synthase that catalyzes the conversion of geranylgeranyl diphosphate (GGPP) into a mixture of diterpenes, including hydropyrene (HP), hydropyrenol (HPol), isoelisabethatriene and traces of isoelisabethatriene B. Hydropyrene is the main product. Some other diterpenoids are also produced in very low quantities. The polypeptide is Hydropyrene synthase (Streptomyces clavuligerus).